Consider the following 774-residue polypeptide: Lon protease 2 (774 aa).

Residues 5 to 198 enclose the Lon N-terminal domain; sequence YPLMPLRDIV…LLLEILFREL (194 aa). 350–357 contacts ATP; that stretch reads GPPGVGKT. In terms of domain architecture, Lon proteolytic spans 588–769; it reads RDEVGLATGL…DQVLEQALLS (182 aa). Active-site residues include S675 and K718.

The protein belongs to the peptidase S16 family. In terms of assembly, homohexamer. Organized in a ring with a central cavity.

Its subcellular location is the cytoplasm. The enzyme catalyses Hydrolysis of proteins in presence of ATP.. Its function is as follows. ATP-dependent serine protease that mediates the selective degradation of mutant and abnormal proteins as well as certain short-lived regulatory proteins. Required for cellular homeostasis and for survival from DNA damage and developmental changes induced by stress. Degrades polypeptides processively to yield small peptide fragments that are 5 to 10 amino acids long. Binds to DNA in a double-stranded, site-specific manner. In Desulfotalea psychrophila (strain LSv54 / DSM 12343), this protein is Lon protease 2.